The chain runs to 166 residues: Small ribosomal subunit protein uS5 (166 aa).

Residues Leu-11–Val-74 enclose the S5 DRBM domain.

This sequence belongs to the universal ribosomal protein uS5 family. As to quaternary structure, part of the 30S ribosomal subunit. Contacts proteins S4 and S8.

With S4 and S12 plays an important role in translational accuracy. Its function is as follows. Located at the back of the 30S subunit body where it stabilizes the conformation of the head with respect to the body. In Marinobacter nauticus (strain ATCC 700491 / DSM 11845 / VT8) (Marinobacter aquaeolei), this protein is Small ribosomal subunit protein uS5.